We begin with the raw amino-acid sequence, 271 residues long: Tryptophan synthase alpha chain (271 aa).

Residues Glu49 and Asp60 each act as proton acceptor in the active site.

It belongs to the TrpA family. Tetramer of two alpha and two beta chains.

It catalyses the reaction (1S,2R)-1-C-(indol-3-yl)glycerol 3-phosphate + L-serine = D-glyceraldehyde 3-phosphate + L-tryptophan + H2O. Its pathway is amino-acid biosynthesis; L-tryptophan biosynthesis; L-tryptophan from chorismate: step 5/5. In terms of biological role, the alpha subunit is responsible for the aldol cleavage of indoleglycerol phosphate to indole and glyceraldehyde 3-phosphate. This chain is Tryptophan synthase alpha chain, found in Burkholderia lata (strain ATCC 17760 / DSM 23089 / LMG 22485 / NCIMB 9086 / R18194 / 383).